Here is an 881-residue protein sequence, read N- to C-terminus: Interference hedgehog (881 aa).

The N-terminal stretch at 1–26 (MSSSSSSLLLMMLLLLLLLLTSKLEA) is a signal peptide. Residues 27-693 (IPVLSSTSPS…NHNETYSLNP (667 aa)) are Extracellular-facing. 4 Ig-like C2-type domains span residues 37–138 (PGVR…IARL), 128–228 (PLVV…IPSS), 242–330 (PYLL…YINV), and 336–425 (PVIV…LQVN). 3 cysteine pairs are disulfide-bonded: Cys60-Cys122, Cys167-Cys212, and Cys266-Cys314. N-linked (GlcNAc...) asparagine glycosylation is found at Asn75, Asn98, Asn194, Asn201, Asn282, Asn349, Asn381, Asn430, and Asn455. An intrachain disulfide couples Cys358 to Cys407. Fibronectin type-III domains are found at residues 450 to 558 (PPSA…LQRG) and 566 to 661 (VPEL…TQRS). Arg486, Lys492, and Lys494 together coordinate heparin. N-linked (GlcNAc...) asparagine glycosylation occurs at Asn517. Arg532 is a binding site for heparin. The N-linked (GlcNAc...) asparagine glycan is linked to Asn548. The tract at residues 655–685 (QGRTQRSKLTTTEQPIQQKGGDRNVNTTPNH) is disordered. The segment covering 656–671 (GRTQRSKLTTTEQPIQ) has biased composition (polar residues). Asn686 is a glycosylation site (N-linked (GlcNAc...) asparagine). A helical membrane pass occupies residues 694-714 (LLTGTIGGGALLLLLLIAFSF). At 715–881 (CLCRRKNRNG…SSGSLNSVGV (167 aa)) the chain is on the cytoplasmic side. Disordered regions lie at residues 768–791 (NPLD…NSPH) and 809–881 (PTTY…SVGV). Polar residues predominate over residues 837–855 (PGSNNNLQQIGSETTTTGQ). Low complexity predominate over residues 865–881 (SSRSENLSSGSLNSVGV).

It belongs to the immunoglobulin superfamily. IHOG family. In terms of assembly, homodimer. Heterotetramer; 2 iHog chains bind 2 hh chains when facilitated by heparin, heparin is required to promote high-affinity interactions between hh and iHog.

It is found in the membrane. Mediates response to the active Hedgehog (Hh) protein signal in embryos, functioning upstream or at the level of patched (ptc). This chain is Interference hedgehog, found in Drosophila willistoni (Fruit fly).